The primary structure comprises 272 residues: Shikimate dehydrogenase (NADP(+)) (272 aa).

Shikimate is bound by residues 14-16 (SKS) and Thr-61. The Proton acceptor role is filled by Lys-65. Residues Asn-86 and Asp-102 each contribute to the shikimate site. NADP(+) is bound by residues 126-130 (GAGGA), 149-154 (NRTFSK), Ser-189, and Met-213. Tyr-215 lines the shikimate pocket. Gly-238 lines the NADP(+) pocket.

This sequence belongs to the shikimate dehydrogenase family. As to quaternary structure, homodimer.

The catalysed reaction is shikimate + NADP(+) = 3-dehydroshikimate + NADPH + H(+). Its pathway is metabolic intermediate biosynthesis; chorismate biosynthesis; chorismate from D-erythrose 4-phosphate and phosphoenolpyruvate: step 4/7. In terms of biological role, involved in the biosynthesis of the chorismate, which leads to the biosynthesis of aromatic amino acids. Catalyzes the reversible NADPH linked reduction of 3-dehydroshikimate (DHSA) to yield shikimate (SA). The protein is Shikimate dehydrogenase (NADP(+)) of Haemophilus influenzae (strain ATCC 51907 / DSM 11121 / KW20 / Rd).